A 376-amino-acid chain; its full sequence is MSLINEPSYSAYSWGGQGGYGNQTVVDKVLPEMLHLIDPHWYQFPPMNPLWHGLLGFVIGCLGFVSVVGNGMVIYIFSTTKGLRTPSNLLVVNLAFSDFLMMLSMSPPMVINCYYETWVLGPFMCELYALLGSLFGCGSIWTMVMIALDRYNVIVKGLAAKPMTNKTAMLRILGIWAMSIAWTVFPLFGWNRYVPEGNMTACGTDYLNKEWVSRSYILVYSVFVYFLPLATIIYSYWFIVQAVSAHEKQMREQAKKMNVASLRSAENANTSAECKLAKVALMTISLWFFAWTPYLVTDFSGIFEWGKISPLATIWCSLFAKANAVYNPIVYGISHPKYRAALNKKFPSLACASEPDDTASQASGATTVSDEKSASA.

The Extracellular segment spans residues 1-51 (MSLINEPSYSAYSWGGQGGYGNQTVVDKVLPEMLHLIDPHWYQFPPMNPLW). An N-linked (GlcNAc...) asparagine glycan is attached at Asn-22. The helical transmembrane segment at 52–76 (HGLLGFVIGCLGFVSVVGNGMVIYI) threads the bilayer. At 77-88 (FSTTKGLRTPSN) the chain is on the cytoplasmic side. Residues 89–113 (LLVVNLAFSDFLMMLSMSPPMVINC) traverse the membrane as a helical segment. Over 114-128 (YYETWVLGPFMCELY) the chain is Extracellular. A disulfide bond links Cys-125 and Cys-202. Residues 129–148 (ALLGSLFGCGSIWTMVMIAL) traverse the membrane as a helical segment. At 149-167 (DRYNVIVKGLAAKPMTNKT) the chain is on the cytoplasmic side. A helical transmembrane segment spans residues 168 to 191 (AMLRILGIWAMSIAWTVFPLFGWN). Residues 192 to 215 (RYVPEGNMTACGTDYLNKEWVSRS) are Extracellular-facing. A glycan (N-linked (GlcNAc...) asparagine) is linked at Asn-198. Residues 216 to 243 (YILVYSVFVYFLPLATIIYSYWFIVQAV) traverse the membrane as a helical segment. Over 244–278 (SAHEKQMREQAKKMNVASLRSAENANTSAECKLAK) the chain is Cytoplasmic. Residues 279-302 (VALMTISLWFFAWTPYLVTDFSGI) traverse the membrane as a helical segment. The Extracellular portion of the chain corresponds to 303-309 (FEWGKIS). The chain crosses the membrane as a helical span at residues 310-334 (PLATIWCSLFAKANAVYNPIVYGIS). Lys-321 carries the N6-(retinylidene)lysine modification. The Cytoplasmic segment spans residues 335–376 (HPKYRAALNKKFPSLACASEPDDTASQASGATTVSDEKSASA). Positions 353 to 376 (SEPDDTASQASGATTVSDEKSASA) are disordered. Polar residues predominate over residues 358–368 (TASQASGATTV).

It belongs to the G-protein coupled receptor 1 family. Opsin subfamily. Post-translationally, phosphorylated on some or all of the serine and threonine residues present in the C-terminal region.

It is found in the membrane. Functionally, visual pigments are the light-absorbing molecules that mediate vision. They consist of an apoprotein, opsin, covalently linked to cis-retinal. The polypeptide is Rhodopsin (Sphodromantis sp. (Mantis)).